The chain runs to 440 residues: Xaa-Pro dipeptidase (440 aa).

The Mn(2+) site is built by aspartate 244, aspartate 255, histidine 335, glutamate 380, and glutamate 419.

This sequence belongs to the peptidase M24B family. Bacterial-type prolidase subfamily. The cofactor is Mn(2+).

The catalysed reaction is Xaa-L-Pro dipeptide + H2O = an L-alpha-amino acid + L-proline. Its function is as follows. Splits dipeptides with a prolyl residue in the C-terminal position. This chain is Xaa-Pro dipeptidase, found in Shewanella putrefaciens (strain CN-32 / ATCC BAA-453).